We begin with the raw amino-acid sequence, 324 residues long: tRNA dimethylallyltransferase (324 aa).

Position 18 to 25 (18 to 25 (GPTAVGKT)) interacts with ATP. 20 to 25 (TAVGKT) is a binding site for substrate. The interaction with substrate tRNA stretch occupies residues 43–46 (DSRQ).

The protein belongs to the IPP transferase family. Monomer. Mg(2+) serves as cofactor.

It catalyses the reaction adenosine(37) in tRNA + dimethylallyl diphosphate = N(6)-dimethylallyladenosine(37) in tRNA + diphosphate. Catalyzes the transfer of a dimethylallyl group onto the adenine at position 37 in tRNAs that read codons beginning with uridine, leading to the formation of N6-(dimethylallyl)adenosine (i(6)A). The polypeptide is tRNA dimethylallyltransferase (Salinibacter ruber (strain DSM 13855 / M31)).